Consider the following 139-residue polypeptide: GSK3B-interacting protein (139 aa).

The interval 1–22 is disordered; sequence METDCNPMELSSMSGFEEGSEL. The required for PRKAR2A interaction; contributes to a protective effect against H(2)O(2)-induced apoptosis stretch occupies residues 41–45; that stretch reads VNDVL. The segment at 115–139 is interaction with GSK3B and acts as a GSK3B inhibitor; that stretch reads SPAYREAFGNALLQRLEALKRDGQS.

The protein belongs to the GSKIP family. In terms of assembly, forms a complex composed of PRKAR2A or PRKAR2B, GSK3B and GSKIP through GSKIP interaction; facilitates PKA-induced phosphorylation of GSK3B leading to GSK3B inactivation; recruits DNM1L through GSK3B for PKA-mediated phosphorylation of DNM1L; promotes beta-catenin degradation through GSK3B-induced phosphorylation of beta-catenin; stabilizes beta-catenin and enhances Wnt-induced signaling through PKA-induced phosphorylation of beta-catenin. Interacts with GSK3B; induces GSK3B-mediated phosphorylation of GSKIP and inhibits GSK3B kinase activity. In terms of processing, phosphorylated by GSK3B. As to expression, detected in heart, brain, placenta, liver, skeletal muscle, kidney, testis, lung and pancreas.

Its subcellular location is the cytoplasm. It is found in the nucleus. In terms of biological role, A-kinase anchoring protein for GSK3B and PKA that regulates or facilitates their kinase activity towards their targets. The ternary complex enhances Wnt-induced signaling by facilitating the GSK3B- and PKA-induced phosphorylation of beta-catenin leading to beta-catenin degradation and stabilization respectively. Upon cAMP activation, the ternary complex contributes to neuroprotection against oxidative stress-induced apoptosis by facilitating the PKA-induced phosphorylation of DML1 and PKA-induced inactivation of GSK3B. During neurite outgrowth promotes neuron proliferation; while increases beta-catenin-induced transcriptional activity through GSK3B kinase activity inhibition, reduces N-cadherin level to promote cell cycle progression. The chain is GSK3B-interacting protein from Homo sapiens (Human).